A 224-amino-acid polypeptide reads, in one-letter code: Adenosylcobinamide-GDP ribazoletransferase (224 aa).

4 consecutive transmembrane segments (helical) span residues 21-41 (LSFK…AAIP), 44-64 (LLYL…ATGL), 97-117 (GGIF…HSPL), and 156-176 (WPAA…TTAV).

It belongs to the CobS family. Mg(2+) serves as cofactor.

It is found in the cell membrane. The catalysed reaction is alpha-ribazole + adenosylcob(III)inamide-GDP = adenosylcob(III)alamin + GMP + H(+). It catalyses the reaction alpha-ribazole 5'-phosphate + adenosylcob(III)inamide-GDP = adenosylcob(III)alamin 5'-phosphate + GMP + H(+). It functions in the pathway cofactor biosynthesis; adenosylcobalamin biosynthesis; adenosylcobalamin from cob(II)yrinate a,c-diamide: step 7/7. Functionally, joins adenosylcobinamide-GDP and alpha-ribazole to generate adenosylcobalamin (Ado-cobalamin). Also synthesizes adenosylcobalamin 5'-phosphate from adenosylcobinamide-GDP and alpha-ribazole 5'-phosphate. The sequence is that of Adenosylcobinamide-GDP ribazoletransferase from Pyrobaculum aerophilum (strain ATCC 51768 / DSM 7523 / JCM 9630 / CIP 104966 / NBRC 100827 / IM2).